A 401-amino-acid polypeptide reads, in one-letter code: Haptoglobin (401 aa).

The signal sequence occupies residues 1 to 18 (MSALQAVVTLLLCGQLLA). 2 consecutive Sushi domains span residues 28–83 (DSCP…ECEE) and 85–142 (DSCP…ECEA). Intrachain disulfides connect Cys49/Cys81, Cys106/Cys140, and Cys144/Cys261. A Peptidase S1 domain is found at 157-399 (IIGGSLDAKG…ILDWVRKTIA (243 aa)). N-linked (GlcNAc...) asparagine glycans are attached at residues Asn286 and Asn316. 2 cysteine pairs are disulfide-bonded: Cys304-Cys335 and Cys346-Cys376. Positions 313–318 (APKNKT) are interaction with CD163.

The protein belongs to the peptidase S1 family. In terms of assembly, tetramer of two alpha and two beta chains; disulfide-linked. The hemoglobin/haptoglobin complex is composed of a haptoglobin dimer bound to two hemoglobin alpha-beta dimers. Interacts with CD163. Interacts with ERGIC3. Expressed by the liver and secreted in plasma.

The protein localises to the secreted. The protein resides in the extracellular space. Its function is as follows. As a result of hemolysis, hemoglobin is found to accumulate in the kidney and is secreted in the urine. Haptoglobin captures, and combines with free plasma hemoglobin to allow hepatic recycling of heme iron and to prevent kidney damage. Haptoglobin also acts as an antioxidant, has antibacterial activity and plays a role in modulating many aspects of the acute phase response. Hemoglobin/haptoglobin complexes are rapidly cleared by the macrophage CD163 scavenger receptor expressed on the surface of liver Kupfer cells through an endocytic lysosomal degradation pathway. The sequence is that of Haptoglobin (HP) from Bos taurus (Bovine).